We begin with the raw amino-acid sequence, 1011 residues long: Multiple C2 domain and transmembrane region protein 7 (1011 aa).

The 110-residue stretch at 1-110 (MMMSNLKLGV…PHSDAVVLHF (110 aa)) folds into the C2 1 domain. A compositionally biased stretch (polar residues) spans 178–195 (QEHQHQHPQGPNQSSSLA). A disordered region spans residues 178–201 (QEHQHQHPQGPNQSSSLAAEQDNH). C2 domains are found at residues 261-381 (IHKD…PQWY), 421-546 (VDCS…ARWY), and 587-709 (YSSD…THSY). Ca(2+)-binding residues include aspartate 294, aspartate 300, aspartate 347, aspartate 349, and aspartate 354. 3 helical membrane-spanning segments follow: residues 812–832 (MMTVFSGVIAVGKWFSDICSW), 846–866 (LMLVCLPELILPTMFLYMFLI), and 954–974 (IFVILCFIAAIVFFITPIQIV).

This sequence belongs to the MCTP family. The cofactor is Ca(2+). As to expression, accumulates specifically in hydathodes. Restricted the basal meristem of roots. Observed in flowers.

The protein localises to the membrane. The protein resides in the vesicle. Its subcellular location is the endosome membrane. Functionally, may function as a signaling molecule by regulating the trafficking of other regulators. This is Multiple C2 domain and transmembrane region protein 7 from Arabidopsis thaliana (Mouse-ear cress).